We begin with the raw amino-acid sequence, 507 residues long: ATP synthase subunit alpha, plastid (507 aa).

170–177 (GDRQTGKT) is an ATP binding site.

The protein belongs to the ATPase alpha/beta chains family. In terms of assembly, F-type ATPases have 2 components, CF(1) - the catalytic core - and CF(0) - the membrane proton channel. CF(1) has five subunits: alpha(3), beta(3), gamma(1), delta(1), epsilon(1). CF(0) has four main subunits: a, b, b' and c.

The protein localises to the plastid membrane. It carries out the reaction ATP + H2O + 4 H(+)(in) = ADP + phosphate + 5 H(+)(out). In terms of biological role, produces ATP from ADP in the presence of a proton gradient across the membrane. The alpha chain is a regulatory subunit. This chain is ATP synthase subunit alpha, plastid, found in Cuscuta gronovii (Common dodder).